Here is a 63-residue protein sequence, read N- to C-terminus: Large ribosomal subunit protein bL28 (63 aa).

It belongs to the bacterial ribosomal protein bL28 family.

The sequence is that of Large ribosomal subunit protein bL28 from Geobacter metallireducens (strain ATCC 53774 / DSM 7210 / GS-15).